A 103-amino-acid chain; its full sequence is MSSLSLAHYLVLGAVLFAISIVGIFLNRKNVIVLLMAIELMLLAVNLNFVAFSHYLGDLAGQVFVFFILTVAAAESAIGLAILVVLFRNLDTINVDDLDSLKG.

The next 3 membrane-spanning stretches (helical) occupy residues 6–26, 32–52, and 63–83; these read LAHY…GIFL, IVLL…FVAF, and VFVF…LAIL.

Belongs to the complex I subunit 4L family. NDH-1 is composed of 14 different subunits. Subunits NuoA, H, J, K, L, M, N constitute the membrane sector of the complex.

It is found in the cell inner membrane. It catalyses the reaction a quinone + NADH + 5 H(+)(in) = a quinol + NAD(+) + 4 H(+)(out). NDH-1 shuttles electrons from NADH, via FMN and iron-sulfur (Fe-S) centers, to quinones in the respiratory chain. The immediate electron acceptor for the enzyme in this species is believed to be ubiquinone. Couples the redox reaction to proton translocation (for every two electrons transferred, four hydrogen ions are translocated across the cytoplasmic membrane), and thus conserves the redox energy in a proton gradient. This Ralstonia pickettii (strain 12D) protein is NADH-quinone oxidoreductase subunit K.